The sequence spans 463 residues: Cysteine--tRNA ligase (463 aa).

C28 lines the Zn(2+) pocket. Residues 30–40 carry the 'HIGH' region motif; it reads ITIYDLCHIGH. Residues C209, H234, and E238 each contribute to the Zn(2+) site. The 'KMSKS' region motif lies at 266–270; that stretch reads KMSKS. Residue K269 participates in ATP binding.

The protein belongs to the class-I aminoacyl-tRNA synthetase family. Monomer. Zn(2+) is required as a cofactor.

It localises to the cytoplasm. It catalyses the reaction tRNA(Cys) + L-cysteine + ATP = L-cysteinyl-tRNA(Cys) + AMP + diphosphate. In Proteus mirabilis (strain HI4320), this protein is Cysteine--tRNA ligase.